A 549-amino-acid chain; its full sequence is Glucose-6-phosphate isomerase (549 aa).

Glutamate 353 functions as the Proton donor in the catalytic mechanism. Active-site residues include histidine 384 and lysine 513.

Belongs to the GPI family.

Its subcellular location is the cytoplasm. The enzyme catalyses alpha-D-glucose 6-phosphate = beta-D-fructose 6-phosphate. The protein operates within carbohydrate biosynthesis; gluconeogenesis. It functions in the pathway carbohydrate degradation; glycolysis; D-glyceraldehyde 3-phosphate and glycerone phosphate from D-glucose: step 2/4. Functionally, catalyzes the reversible isomerization of glucose-6-phosphate to fructose-6-phosphate. This Brucella abortus (strain S19) protein is Glucose-6-phosphate isomerase.